The primary structure comprises 93 residues: Pyrimidine/purine nucleoside phosphorylase (93 aa).

It belongs to the nucleoside phosphorylase PpnP family.

It carries out the reaction a purine D-ribonucleoside + phosphate = a purine nucleobase + alpha-D-ribose 1-phosphate. The catalysed reaction is adenosine + phosphate = alpha-D-ribose 1-phosphate + adenine. The enzyme catalyses cytidine + phosphate = cytosine + alpha-D-ribose 1-phosphate. It catalyses the reaction guanosine + phosphate = alpha-D-ribose 1-phosphate + guanine. It carries out the reaction inosine + phosphate = alpha-D-ribose 1-phosphate + hypoxanthine. The catalysed reaction is thymidine + phosphate = 2-deoxy-alpha-D-ribose 1-phosphate + thymine. The enzyme catalyses uridine + phosphate = alpha-D-ribose 1-phosphate + uracil. It catalyses the reaction xanthosine + phosphate = alpha-D-ribose 1-phosphate + xanthine. Catalyzes the phosphorolysis of diverse nucleosides, yielding D-ribose 1-phosphate and the respective free bases. Can use uridine, adenosine, guanosine, cytidine, thymidine, inosine and xanthosine as substrates. Also catalyzes the reverse reactions. The protein is Pyrimidine/purine nucleoside phosphorylase of Pseudomonas paraeruginosa (strain DSM 24068 / PA7) (Pseudomonas aeruginosa (strain PA7)).